The sequence spans 501 residues: Actin nucleation-promoting factor WASL (501 aa).

Residue Ser2 is modified to N-acetylserine. The WH1 domain occupies Leu31 to Arg138. Disordered regions lie at residues Leu135–Thr158 and Ser180–Thr202. Over residues Lys183–Leu195 the composition is skewed to basic residues. The region spanning Ile200–Gly213 is the CRIB domain. The residue at position 239 (Ser239) is a Phosphoserine; by TNK2. Residue Tyr253 is modified to Phosphotyrosine; by FAK1 and TNK2. Disordered regions lie at residues Glu263 to Leu405 and Gln442 to Asp501. Composition is skewed to pro residues over residues Ala273–Leu361 and Ala368–Leu387. The residue at position 304 (Arg304) is an Omega-N-methylarginine. WH2 domains follow at residues Asn401–Val418 and Gly429–Val446. Polar residues predominate over residues Gln442 to Thr453. Ser480 and Ser481 each carry phosphoserine. Residues Asp482–Asp501 are compositionally biased toward acidic residues.

As to quaternary structure, binds actin and the Arp2/3 complex. Interacts with CDC42. Interacts with FCHSD1. Interacts with FCHSD2. Binds to SH3 domains of GRB2. Interacts with the C-terminal SH3 domain of DNMBP. Interacts with SNX9. Interacts with the WW domains of PRPF40A/FBP11. Interacts with PTK2/FAK1. Interacts with PACSIN1, PACSIN2 and PACSIN3. Interacts with NOSTRIN. Binds to TNK2. Interacts with SNX33. Interacts with NONO (via second RRM domain); the interaction is direct. Component of a multiprotein complex with NONO and SFPQ; associates with the complex via direct interaction with NONO. Post-translationally, phosphorylation at Ser-239, Tyr-253, Ser-480 and Ser-481 enhances actin polymerization activity.

Its subcellular location is the cytoplasm. It is found in the cytoskeleton. It localises to the nucleus. Regulates actin polymerization by stimulating the actin-nucleating activity of the Arp2/3 complex. Involved in various processes, such as mitosis and cytokinesis, via its role in the regulation of actin polymerization. Together with CDC42, involved in the extension and maintenance of the formation of thin, actin-rich surface projections called filopodia. In addition to its role in the cytoplasm, also plays a role in the nucleus by regulating gene transcription, probably by promoting nuclear actin polymerization. Binds to HSF1/HSTF1 and forms a complex on heat shock promoter elements (HSE) that negatively regulates HSP90 expression. Plays a role in dendrite spine morphogenesis. The chain is Actin nucleation-promoting factor WASL (Wasl) from Rattus norvegicus (Rat).